Consider the following 1259-residue polypeptide: Cingulin (1259 aa).

The interval 9 to 324 is head; that stretch reads MADQPIPVGQ…EKFPSLQAQP (316 aa). The ZIM signature appears at 41–55; the sequence is QDSYGVAVRVQGIDG. The segment covering 69 to 79 has biased composition (basic and acidic residues); that stretch reads SSYDYDRHYSE. 5 disordered regions span residues 69 to 151, 169 to 232, 317 to 338, 941 to 969, and 1192 to 1259; these read SSYD…IDTK, VRGR…RQSL, FPSL…KKEL, KSRR…NSSR, and REME…TSSC. Residues 80–100 show a composition bias toward polar residues; it reads RSSTLDTAYSQSSRESAWSRG. The span at 117 to 127 shows a compositional bias: low complexity; it reads SATSQQSTSAS. Over residues 128–145 the composition is skewed to polar residues; sequence NKTNKNGLSTSSFSNQSS. Positions 179-204 are enriched in basic and acidic residues; that stretch reads ALKDERKRSQSLDGRKNYQDTADSRE. Residues 220–229 are compositionally biased toward polar residues; the sequence is VSSANRSFAR. A coiled-coil region spans residues 325 to 1218; it reads GEDTRSLGSQ…KTMEKESKRK (894 aa). Basic and acidic residues predominate over residues 326-338; sequence EDTRSLGSQKKEL. The tract at residues 1220–1259 is tail; that stretch reads IRPAHNDDDDLSSDGEYGGSYDPSSITSLLTESNLQTSSC. The span at 1241–1259 shows a compositional bias: polar residues; the sequence is DPSSITSLLTESNLQTSSC.

Belongs to the cingulin family. In terms of assembly, parallel homodimer. Interacts with TJP1/ZO1 and TJP2/ZO2.

It localises to the cell junction. The protein localises to the tight junction. In terms of biological role, probably plays a role in the formation and regulation of the tight junction (TJ) paracellular permeability barrier, possibly by linking ZO proteins to the actomyosin cytoskeleton. The chain is Cingulin from Xenopus tropicalis (Western clawed frog).